We begin with the raw amino-acid sequence, 1368 residues long: Alpha-latrotoxin-Lg1a (1368 aa).

A helix H8 is the probable transmembrane region of the tetrameric pore inserted in the target cell membrane region spans residues 217–236 (VLYAILYGTQTYVSVMFFLL). A disulfide bridge links Cys392 with Cys1044. ANK repeat units follow at residues 469–500 (QGRTVFHAAAKSGNDKIMIELTFFSKYTDINQ), 504–533 (KGYTPIHVAADSGNAGIVNLLIRSGISVNS), 538–568 (FLQTPLHLAAQRGFVATFQRLMESPEININE), 572–601 (DGFTPLHYAVRGGERILEAFINQAGIDVNV), 605–635 (KGLTPFHLAVIKNDWPVASTLLRSKKIDINA), 639–669 (NNMTALHYAAILGFLETTKQLINLKEINANA), 674–704 (GLLSALHYAILYKHDDVALFLLKSSKVNYNL), 708–737 (GDITPLHLAVMQGRKQVLSEMFNIGININQ), 741–770 (EKYTPLHLAAMSKYPELVEILLDQGSNLEA), 774–803 (TGATPLNLATFKGKSQAALILLKDEVNWRE), 807–837 (NGQMPIHGAAMNGLLDVAQAILYLDATVLDI), 841–870 (NLDTPLNLAAQNSHIDMVKYFIDLGAKVNT), 874–903 (KGQAPLLAFSKKGNLDMVKYLFDKNANVYI), 907–936 (DGLNFFYYAVRNGHLNIVKYAMSEKDKFEW), 953–981 (ISHFAVCDAVQYDKIEIVKYFVGTLGHYS), 982–1011 (ICSPLHQAARYGHIHIVKYLVEEEVLSVDG), 1013–1042 (KPDTPLCYASENGHLAVVQYLIRNGAKVNH), 1046–1075 (NGMTAIDKAITKNQLQVVQILAENGVDFRR), 1079–1109 (LDATPFLTAVASNSYEIAEYLIREKRQNINI), and 1115–1144 (NKETALHLAVYYKNLQMIKLLVKYGIDENI). A furin-like endopeptidase recognition region region spans residues 1174–1177 (KFRR). The propeptide occupies 1178–1368 (EYKSSNGEHD…GETLHLFHES (191 aa)).

This sequence belongs to the cationic peptide 01 (latrotoxin) family. 03 (alpha-latrotoxin) subfamily. As to quaternary structure, homotetramer in membranes. As to expression, expressed in venom gland, cephalothorax, and abdomen tissues from both males and females.

It localises to the secreted. The protein resides in the target cell membrane. Presynaptic neurotoxin that causes massive release of neurotransmitters from vertebrate (but not invertebrate) nerve terminals and endocrine cells via a complex mechanism involving activation of receptor(s) and toxin insertion into the plasma membrane with subsequent pore formation. Binds to neurexin-1-alpha (NRXN1) in a calcium dependent manner, adhesion G protein-coupled receptor L1 (ADGRL1, also termed latrophilin-1 and calcium-independent receptor of latrotoxin (CIRL)), and receptor-type tyrosine-protein phosphatase S (PTPRS), also termed PTP sigma. NRXN1 and PTPRS are suggested to provide a platform for binding and subsequent pore formation events. In contrast, binding to ADGRL1 does not involve oligomerization and channel formation, but direct downstream stimulation of the synaptic fusion machinery. The chain is Alpha-latrotoxin-Lg1a from Latrodectus geometricus (Brown widow spider).